The following is a 509-amino-acid chain: Lysine--tRNA ligase (509 aa).

Glu-418 and Glu-425 together coordinate Mg(2+).

The protein belongs to the class-II aminoacyl-tRNA synthetase family. As to quaternary structure, homodimer. Requires Mg(2+) as cofactor.

It localises to the cytoplasm. It carries out the reaction tRNA(Lys) + L-lysine + ATP = L-lysyl-tRNA(Lys) + AMP + diphosphate. The protein is Lysine--tRNA ligase of Acinetobacter baumannii (strain ATCC 17978 / DSM 105126 / CIP 53.77 / LMG 1025 / NCDC KC755 / 5377).